The sequence spans 485 residues: Zinc finger protein 577 (485 aa).

The segment at 1–21 (MKNATIVMSVRREQGSSSGEG) is disordered. One can recognise a KRAB domain in the interval 23-94 (LSFEDVAVGF…EGAAHSQICP (72 aa)). The C2H2-type 1; degenerate zinc-finger motif lies at 158–180 (HECSVCGRAFSRKAQLIQHQRTE). 7 consecutive C2H2-type zinc fingers follow at residues 186–208 (HGCG…QRTH), 214–236 (HECS…QRTH), 242–264 (YRCS…QRSH), 270–292 (YGCS…QRLH), 298–320 (YKCS…QRIH), 326–348 (YECS…QRTH), and 354–376 (YSCR…EKTH).

Belongs to the krueppel C2H2-type zinc-finger protein family.

It is found in the nucleus. In terms of biological role, may be involved in transcriptional regulation. This chain is Zinc finger protein 577 (ZNF577), found in Homo sapiens (Human).